We begin with the raw amino-acid sequence, 1078 residues long: MFGAASRMDTTAVCTGGVTESRGIVDSLQKFSSLPAYLPTNLHISNAEESFFLKEANQDLTRNSSLQARVEPFFIYRARTPPIINASYGPFSVEKIIPQELLLTSTAFGNMDKFPFNWKLKSHILDSSIYSNRPKVQTLFYVTGMGWDDSDLTEDLPCVKMFAFPEAREVAASCRLQGAPGLCVAELELLPEWFSSGLDLEPEEEIPALLGGTTMELFFTLYPADKAGQCPLEEEGKWENNIHSGLESPQQAFPARERIGSVVVYPTQDDLKWSLVSLDENVVISVPLNLVREGDTATFLVSLTSSSVADQFTLRIKAAAGVKITAVRVSSEDQWAVQEEIDNGSTQTSATLTCMGHRPDTQSRVNGSFYEILQVDFGIDNSSDLAGAQQITWQVEYPIEDSMSELVVSEIFVSQTTFVGIVPLAMDTEVLNTAILTGKPVSVPVKVVGVQEDGSVVDVSESVECKSADEDVIKVSNNCDSIFVNGKEMKSKVDTIVNFTHQHFTSQFEVTVWAPRLPLQIEISDTELSQIKGWRIPVAANRRPTRESDDEDDEEKKGRGCSLQYQHATVRVLTQFVAESPDLGQLTYMLGPDWQFDITDLVTEFMKVEEPKIAQLQDGRTLAGREPGITTVQVLSPLSDSILAEKTVIVLDDRVTIAELGVQLVAGMSLSLQPHRADKRAIVSTAAALDVLQSPQQEAIVSSWILFSDGSVTPLDIYDPKDYSVTVSSLDEMVVSVQANLESKWPIVVAEGEGQGPLIKLEMMISEPCQKTKRKSVLAVGKGNVKVKFEPSSDEHQGGSNDIEGINREYKDHLSNSIEREGNQERAVQEWFHRGTPVGQEESTNKSTTPQSPMEGKNKLLKSGGPDAFTSFPTQGKSPDPNNPSDLTVTSRGLTDLEIGMYALLCVFCLAILVFLINCVAFAWKYRHKRFAVSEQGNIPHSHDWVWLGNEVELLENPVDITLPSEECTTMIDRGLQFEERNFLLNGSSQKTFHSQLLRPSDYVYEKEIKNEPMNSSGPKRKRVKFTSYTTILPEDGGPYTNSILFDSDDNIKWVCQDMGLGDSQDFRDYMESLQDQM.

The Extracellular segment spans residues 1–903 (MFGAASRMDT…LTDLEIGMYA (903 aa)). Asn343, Asn366, and Asn381 each carry an N-linked (GlcNAc...) asparagine glycan. Residues 834 to 887 (RGTPVGQEESTNKSTTPQSPMEGKNKLLKSGGPDAFTSFPTQGKSPDPNNPSDL) form a disordered region. Residues 841–852 (EESTNKSTTPQS) show a composition bias toward polar residues. Residues 904-924 (LLCVFCLAILVFLINCVAFAW) traverse the membrane as a helical segment. The Cytoplasmic segment spans residues 925-1078 (KYRHKRFAVS…DYMESLQDQM (154 aa)).

The protein belongs to the TMEM132 family.

It localises to the membrane. In Homo sapiens (Human), this protein is Transmembrane protein 132B (TMEM132B).